The chain runs to 1649 residues: eIF-2-alpha kinase GCN2 (1649 aa).

A disordered region spans residues 1–26; that stretch reads MAGGRGAAGRGPAEPQESYSQRQDHE. Residues 25-137 form the RWD domain; that stretch reads HELQALEAIY…HHVQSFLSEH (113 aa). A coiled-coil region spans residues 146-205; sequence HEEMLERQAQEKQQRLLEARQKEEQEQREILHEIQKRKEEIKEEKKRKEMAKQERLEITS. Positions 227 to 260 are disordered; sequence HGGSPDFVGNGKARAHSSGRSRRERQYSVCSGEA. Serine 230 carries the phosphoserine modification. Basic residues predominate over residues 239–249; it reads ARAHSSGRSRR. Protein kinase domains are found at residues 296-539 and 590-1001; these read VYNA…HSFI and FEEL…SELL. ATP is bound by residues 596–604 and lysine 619; that span reads LGKGAFGAV. Positions 662–785 are disordered; that stretch reads PAVPGTPPPD…CNEKDSRHEI (124 aa). Position 667 is a phosphothreonine (threonine 667). A compositionally biased stretch (polar residues) spans 705–721; sequence LSSSVEWSTSAERSNSA. Composition is skewed to acidic residues over residues 731-740 and 754-764; these read SSDEEDEDER and SDSDIIFDNED. Residue aspartate 847 is the Proton acceptor of the active site. At threonine 870 the chain carries Phosphothreonine. Threonine 899 and threonine 904 each carry phosphothreonine; by autocatalysis. Residues 1022–1493 are histidyl-tRNA synthetase-like; that stretch reads TDGKAYRTMM…DHVMQKLRTK (472 aa). Lysine 1259 is subject to N6-acetyllysine.

This sequence belongs to the protein kinase superfamily. Ser/Thr protein kinase family. GCN2 subfamily. In terms of assembly, homodimer; homodimerization is important for kinase activation by uncharged tRNAs. Interacts with GCN1; this interaction stimulates EIF2AK4/GCN2 kinase activity and is impaired by IMPACT upon a variety of stress conditions, such as amino acid depletion, UV-C irradiation, proteasome inhibitor treatment and glucose deprivation. Interacts with DNAJC3; this interaction inhibits EIF2AK4/GCN2 kinase activity during endoplasmic reticulum (ER), hypothermic and amino acid-starving stress conditions. Interacts with MAP3K20; activates EIF2AK4/GCN2 kinase activity in response to moderate ribotoxic stress. Autophosphorylated; autophosphorylation on Thr-899 is increased upon amino acid starvation and in UV irradiation cells and inhibited in presence of IMPACT.

It is found in the cytoplasm. The enzyme catalyses L-seryl-[protein] + ATP = O-phospho-L-seryl-[protein] + ADP + H(+). The catalysed reaction is L-threonyl-[protein] + ATP = O-phospho-L-threonyl-[protein] + ADP + H(+). Its function is as follows. Metabolic-stress sensing protein kinase that phosphorylates the alpha subunit of eukaryotic translation initiation factor 2 (EIF2S1/eIF-2-alpha) in response to low amino acid availability. Plays a role as an activator of the integrated stress response (ISR) required for adaptation to amino acid starvation. EIF2S1/eIF-2-alpha phosphorylation in response to stress converts EIF2S1/eIF-2-alpha into a global protein synthesis inhibitor, leading to a global attenuation of cap-dependent translation, and thus to a reduced overall utilization of amino acids, while concomitantly initiating the preferential translation of ISR-specific mRNAs, such as the transcriptional activator ATF4, and hence allowing ATF4-mediated reprogramming of amino acid biosynthetic gene expression to alleviate nutrient depletion. Required for the translational induction of protein kinase PRKCH following amino acid starvation. Binds uncharged tRNAs. Involved in cell cycle arrest by promoting cyclin D1 mRNA translation repression after the unfolded protein response pathway (UPR) activation or cell cycle inhibitor CDKN1A/p21 mRNA translation activation in response to amino acid deprivation. Plays a role in the consolidation of synaptic plasticity, learning as well as formation of long-term memory. Plays a role in neurite outgrowth inhibition. Plays a role in feeding behavior to maintain amino acid homeostasis; contributes to the innate aversion toward diets of imbalanced amino acid composition. Plays a proapoptotic role in response to glucose deprivation. Promotes global cellular protein synthesis repression in response to UV irradiation independently of the stress-activated protein kinase/c-Jun N-terminal kinase (SAPK/JNK) and p38 MAPK signaling pathways. Plays a role in the antiviral response against alphavirus infection; impairs early viral mRNA translation of the incoming genomic virus RNA, thus preventing alphavirus replication. The polypeptide is eIF-2-alpha kinase GCN2 (Rattus norvegicus (Rat)).